A 481-amino-acid chain; its full sequence is Glutamate--tRNA ligase (481 aa).

The 'HIGH' region motif lies at 28–38 (PSPTGFLHLGG). Positions 139–148 (RYDGTWRPEP) are enriched in basic and acidic residues. A disordered region spans residues 139–159 (RYDGTWRPEPGKTLPPVPADR). A 'KMSKS' region motif is present at residues 260–264 (KLSKR). Lysine 263 contacts ATP.

It belongs to the class-I aminoacyl-tRNA synthetase family. Glutamate--tRNA ligase type 1 subfamily. In terms of assembly, monomer.

It localises to the cytoplasm. It catalyses the reaction tRNA(Glu) + L-glutamate + ATP = L-glutamyl-tRNA(Glu) + AMP + diphosphate. Functionally, catalyzes the attachment of glutamate to tRNA(Glu) in a two-step reaction: glutamate is first activated by ATP to form Glu-AMP and then transferred to the acceptor end of tRNA(Glu). The protein is Glutamate--tRNA ligase of Bordetella parapertussis (strain 12822 / ATCC BAA-587 / NCTC 13253).